The primary structure comprises 242 residues: MSKSRLTVFSFVRRFLLRLMVVLAVFWGGGIALFSVAPVPFSAVMVERQVSAWLYGNFRYVAHSDWVSMDQISPWMGLAVIAAEDQKFPEHWGFDVASIEKALAHNERNENRIRGASTISQQTAKNLFLWDGRSWVRKGLEAGLTLGIETVWSKKRILTVYLNIAEFGDGVFGVEAAAQRYFHKPASKLTRSEAALLAAVLPNPLRFKVSSPSGYVRSRQAWILRQMYQLGGEPFMQQHQLD.

A helical membrane pass occupies residues 19–39 (LMVVLAVFWGGGIALFSVAPV).

This sequence belongs to the glycosyltransferase 51 family.

The protein localises to the cell inner membrane. It catalyses the reaction [GlcNAc-(1-&gt;4)-Mur2Ac(oyl-L-Ala-gamma-D-Glu-L-Lys-D-Ala-D-Ala)](n)-di-trans,octa-cis-undecaprenyl diphosphate + beta-D-GlcNAc-(1-&gt;4)-Mur2Ac(oyl-L-Ala-gamma-D-Glu-L-Lys-D-Ala-D-Ala)-di-trans,octa-cis-undecaprenyl diphosphate = [GlcNAc-(1-&gt;4)-Mur2Ac(oyl-L-Ala-gamma-D-Glu-L-Lys-D-Ala-D-Ala)](n+1)-di-trans,octa-cis-undecaprenyl diphosphate + di-trans,octa-cis-undecaprenyl diphosphate + H(+). The protein operates within cell wall biogenesis; peptidoglycan biosynthesis. Functionally, peptidoglycan polymerase that catalyzes glycan chain elongation from lipid-linked precursors. The protein is Biosynthetic peptidoglycan transglycosylase of Escherichia coli (strain 55989 / EAEC).